Reading from the N-terminus, the 269-residue chain is MNRIHAVILDWAGTTVDFGSFAPTQIFVEAFRQAFDVEITLAEARVPMGLGKWQHIEALGKLPTVDARWQAKFGRAMSAADIDAIYAAFMPLQIAKVVDFSSPIAGVIDTIATLRAEGIKIGSCSGYPRAVMERLVPAAAEHGYRPDHWVATDDLVAGGRPGPWMALQNVIALGIDAVAHCVKVDDAAPGISEGLNAGMWTVGLAVSGNEFGATWDAYQTMSKEDVAVRREHAASKLYAAGAHYVVDSLADLPEVIAHINARLAQGERP.

Aspartate 10 (nucleophile) is an active-site residue. Mg(2+) is bound by residues aspartate 10 and alanine 12. Residue lysine 52 is the Schiff-base intermediate with substrate of the active site. Mg(2+) is bound at residue aspartate 186.

It belongs to the HAD-like hydrolase superfamily. PhnX family. In terms of assembly, homodimer. The cofactor is Mg(2+).

The catalysed reaction is phosphonoacetaldehyde + H2O = acetaldehyde + phosphate + H(+). Functionally, involved in phosphonate degradation. This Salmonella typhi protein is Phosphonoacetaldehyde hydrolase.